Reading from the N-terminus, the 222-residue chain is uncharacterized protein (222 aa).

4 helical membrane-spanning segments follow: residues 25 to 45 (LLWLFFTLLGLGVFGIMPATA), 80 to 100 (LLGAVLALIGVIIYIDLALIY), 111 to 131 (FAIMIFGFLFVSMLFYVFPLL), and 160 to 180 (LALTVALFFLLAYLPGIVPFF).

Its subcellular location is the cell membrane. This is an uncharacterized protein from Bacillus subtilis (strain 168).